A 305-amino-acid chain; its full sequence is Mitochondrial distribution and morphology protein 12 (305 aa).

Positions 1-236 constitute an SMP-LTD domain; it reads MSVEIDWDNI…WPSWIDLDFT (236 aa). A disordered region spans residues 233-305; it reads LDFTPEDPED…RVNSNTSLEE (73 aa). Residues 235-248 show a composition bias toward acidic residues; the sequence is FTPEDPEDPEEEGR. Positions 258-269 are enriched in basic and acidic residues; that stretch reads NDGKDIEMKSGT. The segment covering 279-305 has biased composition (polar residues); it reads ESVQHVSPAVTSIDQESRVNSNTSLEE.

The protein belongs to the MDM12 family. Component of the ER-mitochondria encounter structure (ERMES) or MDM complex, composed of MMM1, MDM10, MDM12 and MDM34. An MMM1 homodimer associates with one molecule of MDM12 on each side in a pairwise head-to-tail manner, and the SMP-LTD domains of MMM1 and MDM12 generate a continuous hydrophobic tunnel for phospholipid trafficking.

It localises to the mitochondrion outer membrane. It is found in the endoplasmic reticulum membrane. In terms of biological role, component of the ERMES/MDM complex, which serves as a molecular tether to connect the endoplasmic reticulum (ER) and mitochondria. Components of this complex are involved in the control of mitochondrial shape and protein biogenesis, and function in nonvesicular lipid trafficking between the ER and mitochondria. MDM12 is required for the interaction of the ER-resident membrane protein MMM1 and the outer mitochondrial membrane-resident beta-barrel protein MDM10. The MDM12-MMM1 subcomplex functions in the major beta-barrel assembly pathway that is responsible for biogenesis of all mitochondrial outer membrane beta-barrel proteins, and acts in a late step after the SAM complex. The MDM10-MDM12-MMM1 subcomplex further acts in the TOM40-specific pathway after the action of the MDM12-MMM1 complex. Essential for establishing and maintaining the structure of mitochondria and maintenance of mtDNA nucleoids. This is Mitochondrial distribution and morphology protein 12 from Kluyveromyces lactis (strain ATCC 8585 / CBS 2359 / DSM 70799 / NBRC 1267 / NRRL Y-1140 / WM37) (Yeast).